A 284-amino-acid chain; its full sequence is Pantothenate synthetase (284 aa).

Residue Met30–His37 coordinates ATP. His37 functions as the Proton donor in the catalytic mechanism. Residue Gln61 participates in (R)-pantoate binding. Gln61 contacts beta-alanine. Gly149–Asp152 lines the ATP pocket. Gln155 is a (R)-pantoate binding site. ATP contacts are provided by residues Val178 and Leu186–Arg189.

The protein belongs to the pantothenate synthetase family. In terms of assembly, homodimer.

It is found in the cytoplasm. It catalyses the reaction (R)-pantoate + beta-alanine + ATP = (R)-pantothenate + AMP + diphosphate + H(+). The protein operates within cofactor biosynthesis; (R)-pantothenate biosynthesis; (R)-pantothenate from (R)-pantoate and beta-alanine: step 1/1. Catalyzes the condensation of pantoate with beta-alanine in an ATP-dependent reaction via a pantoyl-adenylate intermediate. In Klebsiella pneumoniae subsp. pneumoniae (strain ATCC 700721 / MGH 78578), this protein is Pantothenate synthetase.